A 503-amino-acid chain; its full sequence is GMP synthase [glutamine-hydrolyzing] (503 aa).

The 189-residue stretch at 1–189 folds into the Glutamine amidotransferase type-1 domain; that stretch reads MVLVLDFGSQ…FLELAGAKRD (189 aa). Cys78 functions as the Nucleophile in the catalytic mechanism. Residues His164 and Glu166 contribute to the active site. In terms of domain architecture, GMPS ATP-PPase spans 190-378; that stretch reads WTPEHVLEEL…LGLPDTLRLR (189 aa). Residue 217–223 coordinates ATP; the sequence is SGGVDSS.

As to quaternary structure, homodimer.

It catalyses the reaction XMP + L-glutamine + ATP + H2O = GMP + L-glutamate + AMP + diphosphate + 2 H(+). It functions in the pathway purine metabolism; GMP biosynthesis; GMP from XMP (L-Gln route): step 1/1. Functionally, catalyzes the synthesis of GMP from XMP. The polypeptide is GMP synthase [glutamine-hydrolyzing] (Thermus thermophilus (strain ATCC BAA-163 / DSM 7039 / HB27)).